The sequence spans 123 residues: Large ribosomal subunit protein bL20 (123 aa).

This sequence belongs to the bacterial ribosomal protein bL20 family.

Its function is as follows. Binds directly to 23S ribosomal RNA and is necessary for the in vitro assembly process of the 50S ribosomal subunit. It is not involved in the protein synthesizing functions of that subunit. The protein is Large ribosomal subunit protein bL20 of Ehrlichia ruminantium (strain Gardel).